The following is a 319-amino-acid chain: MLRYCLHRLLIGLGMLLALTILIFVLLQLTPGDPIDAYINPNVAMTQAEMDALRAQLGLDRPLPVQYLAWLGQAVQGNLGHSLQRFNETVSGLIASRIGPTLLLMAAGLAIAIVIGVTTGIISAVRRNSFLDYSFSVLALLGISSPAFLTALLGLYVFSVRLKWAPSGGMLTPATDFSIPDLLRHLALPALVLSIGHAALIMRYMRSSMLETLNQDYVRTARAKGVREFWVVVKHTLRNAMLPVVTLIGSTIGLAVGGAIFIESVFNWPGMGLLLINAVETRDYPVIMGATLVIGACVIIVNILTDLAYAVIDPRIKVT.

6 helical membrane-spanning segments follow: residues L9–L29, L102–I122, L138–F158, L182–M202, L242–I262, and Y284–L304. The region spanning I98 to T305 is the ABC transmembrane type-1 domain.

Belongs to the binding-protein-dependent transport system permease family. In terms of assembly, the complex is composed of two ATP-binding proteins (BRA0404 and BRA0405), two transmembrane proteins (BRA0407 and BRA0408) and a solute-binding protein (BRA0409).

The protein resides in the cell inner membrane. Its function is as follows. Probably part of an ABC transporter complex that could be involved in peptide import. Probably responsible for the translocation of the substrate across the membrane. In Brucella suis biovar 1 (strain 1330), this protein is Putative peptide permease protein BRA0408/BS1330_II0405.